Here is a 480-residue protein sequence, read N- to C-terminus: UDP-glycosyltransferase 71C5 (480 aa).

UDP-alpha-D-glucose contacts are provided by residues S290, 349–351 (APQ), 366–374 (HCGWNSVQE), and 388–391 (YAEQ).

This sequence belongs to the UDP-glycosyltransferase family.

Possesses low quercetin 3-O-glucosyltransferase activity in vitro. The sequence is that of UDP-glycosyltransferase 71C5 (UGT71C5) from Arabidopsis thaliana (Mouse-ear cress).